Reading from the N-terminus, the 534-residue chain is Peptide chain release factor 3 (534 aa).

The tr-type G domain occupies 9–278 (ARRRTFAIIS…FFIEHAPPPQ (270 aa)). GTP contacts are provided by residues 18–25 (SHPDAGKT), 86–90 (DTPGH), and 140–143 (NKLD).

The protein belongs to the TRAFAC class translation factor GTPase superfamily. Classic translation factor GTPase family. PrfC subfamily.

The protein resides in the cytoplasm. Increases the formation of ribosomal termination complexes and stimulates activities of RF-1 and RF-2. It binds guanine nucleotides and has strong preference for UGA stop codons. It may interact directly with the ribosome. The stimulation of RF-1 and RF-2 is significantly reduced by GTP and GDP, but not by GMP. The polypeptide is Peptide chain release factor 3 (Xanthomonas oryzae pv. oryzae (strain PXO99A)).